Here is a 213-residue protein sequence, read N- to C-terminus: Orotate phosphoribosyltransferase (213 aa).

Residue K26 participates in 5-phospho-alpha-D-ribose 1-diphosphate binding. Residue F34–F35 participates in orotate binding. 5-phospho-alpha-D-ribose 1-diphosphate is bound by residues Y72–K73, R99, K100, K103, H105, and D124–A132. Residues T128 and R156 each contribute to the orotate site.

Belongs to the purine/pyrimidine phosphoribosyltransferase family. PyrE subfamily. As to quaternary structure, homodimer. The cofactor is Mg(2+).

The catalysed reaction is orotidine 5'-phosphate + diphosphate = orotate + 5-phospho-alpha-D-ribose 1-diphosphate. It functions in the pathway pyrimidine metabolism; UMP biosynthesis via de novo pathway; UMP from orotate: step 1/2. Catalyzes the transfer of a ribosyl phosphate group from 5-phosphoribose 1-diphosphate to orotate, leading to the formation of orotidine monophosphate (OMP). The polypeptide is Orotate phosphoribosyltransferase (Pseudomonas syringae pv. syringae (strain B728a)).